Here is a 212-residue protein sequence, read N- to C-terminus: MEKKKGISMAVIKRLPKYHRYLQELMENDVDRISSKELSEKIGFTASQIRQDLNCFGDFGQQGYGYNVKELYNNIGSILGLTRDYNTVIIGAGNIGQAIANYNSFNRLGFKLKGIFDANPRMFGIKIRDVEIQDVEKLKDFVKENDIEIGIICVPRTNAQKVCNDLVEGGIKGIWNFAPIDLEVPKDIRVENVHLSESMMTLVYLLNHNDVK.

Positions 17–56 form a DNA-binding region, H-T-H motif; that stretch reads KYHRYLQELMENDVDRISSKELSEKIGFTASQIRQDLNCF. 91 to 96 is an NAD(+) binding site; that stretch reads GAGNIG.

The protein belongs to the transcriptional regulatory Rex family. As to quaternary structure, homodimer.

Its subcellular location is the cytoplasm. In terms of biological role, modulates transcription in response to changes in cellular NADH/NAD(+) redox state. The protein is Redox-sensing transcriptional repressor Rex of Clostridium perfringens (strain ATCC 13124 / DSM 756 / JCM 1290 / NCIMB 6125 / NCTC 8237 / Type A).